Consider the following 83-residue polypeptide: Apolipoprotein C-I, basic form (83 aa).

The signal sequence occupies residues 1 to 26 (MRLFLSLPVLVVVLSMVLEGPAPAQG).

Belongs to the apolipoprotein C1 family.

It localises to the secreted. Inhibitor of lipoprotein binding to the low density lipoprotein (LDL) receptor, LDL receptor-related protein, and very low density lipoprotein (VLDL) receptor. Associates with high density lipoproteins (HDL) and the triacylglycerol-rich lipoproteins in the plasma and makes up about 10% of the protein of the VLDL and 2% of that of HDL. Appears to interfere directly with fatty acid uptake and is also the major plasma inhibitor of cholesteryl ester transfer protein (CETP). Binds free fatty acids and reduces their intracellular esterification. Modulates the interaction of APOE with beta-migrating VLDL and inhibits binding of beta-VLDL to the LDL receptor-related protein. The chain is Apolipoprotein C-I, basic form (APOC1B) from Cercocebus atys (Sooty mangabey).